The following is a 264-amino-acid chain: S-adenosylmethionine decarboxylase proenzyme (264 aa).

Serine 112 (schiff-base intermediate with substrate; via pyruvic acid) is an active-site residue. Serine 112 is modified (pyruvic acid (Ser); by autocatalysis). Histidine 117 acts as the Proton acceptor; for processing activity in catalysis. The active-site Proton donor; for catalytic activity is the cysteine 140.

Belongs to the prokaryotic AdoMetDC family. Type 2 subfamily. As to quaternary structure, heterooctamer of four alpha and four beta chains arranged as a tetramer of alpha/beta heterodimers. It depends on pyruvate as a cofactor. In terms of processing, is synthesized initially as an inactive proenzyme. Formation of the active enzyme involves a self-maturation process in which the active site pyruvoyl group is generated from an internal serine residue via an autocatalytic post-translational modification. Two non-identical subunits are generated from the proenzyme in this reaction, and the pyruvate is formed at the N-terminus of the alpha chain, which is derived from the carboxyl end of the proenzyme. The post-translation cleavage follows an unusual pathway, termed non-hydrolytic serinolysis, in which the side chain hydroxyl group of the serine supplies its oxygen atom to form the C-terminus of the beta chain, while the remainder of the serine residue undergoes an oxidative deamination to produce ammonia and the pyruvoyl group blocking the N-terminus of the alpha chain.

The catalysed reaction is S-adenosyl-L-methionine + H(+) = S-adenosyl 3-(methylsulfanyl)propylamine + CO2. It functions in the pathway amine and polyamine biosynthesis; S-adenosylmethioninamine biosynthesis; S-adenosylmethioninamine from S-adenosyl-L-methionine: step 1/1. In terms of biological role, catalyzes the decarboxylation of S-adenosylmethionine to S-adenosylmethioninamine (dcAdoMet), the propylamine donor required for the synthesis of the polyamines spermine and spermidine from the diamine putrescine. In Shigella boydii serotype 4 (strain Sb227), this protein is S-adenosylmethionine decarboxylase proenzyme.